Consider the following 420-residue polypeptide: Zinc finger and BTB domain-containing protein 42 (420 aa).

The BTB domain occupies Cys24–Ser92. Disordered regions lie at residues Pro174 to Cys204 and Gln216 to Cys248. A compositionally biased stretch (low complexity) spans Asp227–Asp241. C2H2-type zinc fingers lie at residues Cys292–His314, Pro332–His354, Tyr360–His382, and His388–His411.

The protein belongs to the krueppel C2H2-type zinc-finger protein family. ZBTB18 subfamily.

Its subcellular location is the cytoplasm. It localises to the nucleus. The protein resides in the nucleoplasm. Its function is as follows. Transcriptional repressor. Specifically binds DNA and probably acts by recruiting chromatin remodeling multiprotein complexes. This chain is Zinc finger and BTB domain-containing protein 42 (Zbtb42), found in Rattus norvegicus (Rat).